A 338-amino-acid chain; its full sequence is Ketol-acid reductoisomerase (NADP(+)) (338 aa).

The region spanning 1–181 is the KARI N-terminal Rossmann domain; sequence MKVFYDKDCD…GGGRTGIIET (181 aa). Residues 24 to 27, arginine 47, serine 50, threonine 52, and 82 to 85 each bind NADP(+); these read YGSQ and DEFQ. The active site involves histidine 107. Glycine 133 is a binding site for NADP(+). The KARI C-terminal knotted domain maps to 182–327; sequence TFKDETETDL…EQLRSMMPWI (146 aa). Residues aspartate 190, glutamate 194, glutamate 226, and glutamate 230 each contribute to the Mg(2+) site. Position 251 (serine 251) interacts with substrate.

Belongs to the ketol-acid reductoisomerase family. Requires Mg(2+) as cofactor.

The catalysed reaction is (2R)-2,3-dihydroxy-3-methylbutanoate + NADP(+) = (2S)-2-acetolactate + NADPH + H(+). It carries out the reaction (2R,3R)-2,3-dihydroxy-3-methylpentanoate + NADP(+) = (S)-2-ethyl-2-hydroxy-3-oxobutanoate + NADPH + H(+). Its pathway is amino-acid biosynthesis; L-isoleucine biosynthesis; L-isoleucine from 2-oxobutanoate: step 2/4. It functions in the pathway amino-acid biosynthesis; L-valine biosynthesis; L-valine from pyruvate: step 2/4. Involved in the biosynthesis of branched-chain amino acids (BCAA). Catalyzes an alkyl-migration followed by a ketol-acid reduction of (S)-2-acetolactate (S2AL) to yield (R)-2,3-dihydroxy-isovalerate. In the isomerase reaction, S2AL is rearranged via a Mg-dependent methyl migration to produce 3-hydroxy-3-methyl-2-ketobutyrate (HMKB). In the reductase reaction, this 2-ketoacid undergoes a metal-dependent reduction by NADPH to yield (R)-2,3-dihydroxy-isovalerate. This Pseudomonas putida (strain W619) protein is Ketol-acid reductoisomerase (NADP(+)).